Here is a 330-residue protein sequence, read N- to C-terminus: Clavaminate synthase-like protein At3g21360 (330 aa).

Ala-2 carries the N-acetylalanine modification. Fe cation is bound by residues His-120, Glu-122, and His-313.

Fe cation serves as cofactor.

This Arabidopsis thaliana (Mouse-ear cress) protein is Clavaminate synthase-like protein At3g21360.